The following is a 193-amino-acid chain: MAMNAKFRVPFRRRREGKTDFRQRLGLLLSGKPRLVARKSLNNVTAQLMAYDEKGDVVLVSAHSKELVKMGYKGHCGNLPAAYLTGLLLGAKAVKEDVKEAVLDKGLHRATKGAAIFAVLKGALDAGMDIPHGDKIIADEERLNGTHVKNYAESLKEDADAYKKQFSKYLEKGLNPEDLPEHVEELKEKILNL.

Belongs to the universal ribosomal protein uL18 family. In terms of assembly, part of the 50S ribosomal subunit. Contacts the 5S and 23S rRNAs.

Its function is as follows. This is one of the proteins that bind and probably mediate the attachment of the 5S RNA into the large ribosomal subunit, where it forms part of the central protuberance. The chain is Large ribosomal subunit protein uL18 from Methanococcus maripaludis (strain DSM 14266 / JCM 13030 / NBRC 101832 / S2 / LL).